The following is a 233-amino-acid chain: Ribonuclease HII (233 aa).

The region spanning 21-211 is the RNase H type-2 domain; that stretch reads KIIAGVDEVG…LDALPQWRHL (191 aa). Residues Asp-27, Glu-28, and Asp-119 each contribute to the a divalent metal cation site.

The protein belongs to the RNase HII family. Mn(2+) is required as a cofactor. Requires Mg(2+) as cofactor.

The protein localises to the cytoplasm. It catalyses the reaction Endonucleolytic cleavage to 5'-phosphomonoester.. Endonuclease that specifically degrades the RNA of RNA-DNA hybrids. The protein is Ribonuclease HII (rnhB) of Streptomyces coelicolor (strain ATCC BAA-471 / A3(2) / M145).